The sequence spans 612 residues: Dihydroxy-acid dehydratase (612 aa).

Aspartate 81 is a binding site for Mg(2+). Cysteine 122 contacts [2Fe-2S] cluster. Residues aspartate 123 and lysine 124 each contribute to the Mg(2+) site. Lysine 124 is modified (N6-carboxylysine). Cysteine 193 lines the [2Fe-2S] cluster pocket. Glutamate 489 contacts Mg(2+). Residue serine 515 is the Proton acceptor of the active site.

This sequence belongs to the IlvD/Edd family. Homodimer. [2Fe-2S] cluster is required as a cofactor. Mg(2+) serves as cofactor.

It carries out the reaction (2R)-2,3-dihydroxy-3-methylbutanoate = 3-methyl-2-oxobutanoate + H2O. The catalysed reaction is (2R,3R)-2,3-dihydroxy-3-methylpentanoate = (S)-3-methyl-2-oxopentanoate + H2O. It functions in the pathway amino-acid biosynthesis; L-isoleucine biosynthesis; L-isoleucine from 2-oxobutanoate: step 3/4. It participates in amino-acid biosynthesis; L-valine biosynthesis; L-valine from pyruvate: step 3/4. Functions in the biosynthesis of branched-chain amino acids. Catalyzes the dehydration of (2R,3R)-2,3-dihydroxy-3-methylpentanoate (2,3-dihydroxy-3-methylvalerate) into 2-oxo-3-methylpentanoate (2-oxo-3-methylvalerate) and of (2R)-2,3-dihydroxy-3-methylbutanoate (2,3-dihydroxyisovalerate) into 2-oxo-3-methylbutanoate (2-oxoisovalerate), the penultimate precursor to L-isoleucine and L-valine, respectively. The protein is Dihydroxy-acid dehydratase of Ectopseudomonas mendocina (strain ymp) (Pseudomonas mendocina).